Reading from the N-terminus, the 363-residue chain is uncharacterized protein (363 aa).

29 to 36 (GSINSGKT) serves as a coordination point for ATP.

It belongs to the archaeal ATPase family.

This is an uncharacterized protein from Methanocaldococcus jannaschii (strain ATCC 43067 / DSM 2661 / JAL-1 / JCM 10045 / NBRC 100440) (Methanococcus jannaschii).